The sequence spans 517 residues: Serine hydroxymethyltransferase 2, mitochondrial (517 aa).

A mitochondrion-targeting transit peptide spans 1–31; the sequence is MAMASALRRLSSSSNKPLQRLFNGGHLYSMS. The residue at position 287 (K287) is an N6-(pyridoxal phosphate)lysine.

This sequence belongs to the SHMT family. In terms of assembly, homotetramer. Requires pyridoxal 5'-phosphate as cofactor.

The protein localises to the mitochondrion. It catalyses the reaction (6R)-5,10-methylene-5,6,7,8-tetrahydrofolate + glycine + H2O = (6S)-5,6,7,8-tetrahydrofolate + L-serine. The protein operates within one-carbon metabolism; tetrahydrofolate interconversion. Its function is as follows. Catalyzes the interconversion of serine and glycine. The chain is Serine hydroxymethyltransferase 2, mitochondrial from Flaveria pringlei.